We begin with the raw amino-acid sequence, 317 residues long: F-box protein FBW2 (317 aa).

The F-box domain occupies 7–54; the sequence is FRHWDELIPDALGLIFSHLPLQEVLTVVPRVCKAWNRAVTGPYCWQEI.

As to quaternary structure, part of a SCF (SKP1-cullin-F-box) protein ligase complex. Interacts with CUL1, CUL2 and SPK1B/ASK2.

It localises to the nucleus. It participates in protein modification; protein ubiquitination. In terms of biological role, component of SCF(ASK-cullin-F-box) E3 ubiquitin ligase complexes, which may mediate the ubiquitination and subsequent proteasomal degradation of target proteins. In Arabidopsis thaliana (Mouse-ear cress), this protein is F-box protein FBW2 (FBW2).